Consider the following 356-residue polypeptide: Fructose-bisphosphate aldolase 1, chloroplastic (356 aa).

The transit peptide at 1–6 directs the protein to the chloroplast; the sequence is GLTIRA. Positions 53 and 143 each coordinate substrate. Glu-183 (proton acceptor) is an active-site residue. Lys-225 serves as the catalytic Schiff-base intermediate with dihydroxyacetone-P.

It belongs to the class I fructose-bisphosphate aldolase family.

It is found in the plastid. It localises to the chloroplast. It catalyses the reaction beta-D-fructose 1,6-bisphosphate = D-glyceraldehyde 3-phosphate + dihydroxyacetone phosphate. Its pathway is carbohydrate degradation; glycolysis; D-glyceraldehyde 3-phosphate and glycerone phosphate from D-glucose: step 4/4. The chain is Fructose-bisphosphate aldolase 1, chloroplastic from Pisum sativum (Garden pea).